We begin with the raw amino-acid sequence, 354 residues long: Transcription factor HHO2 (354 aa).

Positions 93-102 are enriched in acidic residues; sequence VQEEEEEDGE. Residues 93 to 112 form a disordered region; the sequence is VQEEEEEDGEHESSPELVNN. Residues 103–112 are compositionally biased toward basic and acidic residues; sequence HESSPELVNN. The HTH myb-type domain occupies 212 to 272; that stretch reads THRKQRRCWS…HLQKYRLHTR (61 aa). Positions 243–268 form a DNA-binding region, H-T-H motif; the sequence is PKQIRDHMKVDGLTNDEVKSHLQKYR. Residues 324-354 are disordered; that stretch reads VAQSPKRSLERSCNSPAASSSTNTNTSTPVS. The segment covering 337–354 has biased composition (low complexity); that stretch reads NSPAASSSTNTNTSTPVS.

It is found in the nucleus. Functionally, probable transcription factor involved in phosphate homeostasis. Involved in the regulation of the developmental response of lateral roots, acquisition and/or mobilization of phosphate and expression of a subset of genes involved in phosphate sensing and signaling pathway. Is a target of the transcription factor PHR1. The protein is Transcription factor HHO2 of Arabidopsis thaliana (Mouse-ear cress).